A 94-amino-acid polypeptide reads, in one-letter code: Co-chaperonin GroES (94 aa).

Belongs to the GroES chaperonin family. Heptamer of 7 subunits arranged in a ring. Interacts with the chaperonin GroEL.

It is found in the cytoplasm. Functionally, together with the chaperonin GroEL, plays an essential role in assisting protein folding. The GroEL-GroES system forms a nano-cage that allows encapsulation of the non-native substrate proteins and provides a physical environment optimized to promote and accelerate protein folding. GroES binds to the apical surface of the GroEL ring, thereby capping the opening of the GroEL channel. The chain is Co-chaperonin GroES from Exiguobacterium sibiricum (strain DSM 17290 / CCUG 55495 / CIP 109462 / JCM 13490 / 255-15).